We begin with the raw amino-acid sequence, 509 residues long: Cruciferin CRU1 (509 aa).

Positions 1–23 are cleaved as a signal peptide; that stretch reads MVKVPHLLVATFGVLLVLNGCLA. Cys37 and Cys70 form a disulfide bridge. Positions 42-271 constitute a Cupin type-1 1 domain; sequence LDVLQPTETI…ALKIDVRLAQ (230 aa). Phosphoserine occurs at positions 53 and 97. Cys113 and Cys326 are joined by a disulfide. Thr116 carries the phosphothreonine modification. 3 disordered regions span residues 119 to 175, 230 to 249, and 301 to 321; these read DSQP…GFRD, RLAG…QQQN, and YESE…DNGL. Low complexity predominate over residues 124-172; that stretch reads QGQQQGQPWQGQQGQQGQQGQQGQQGQQGQQGQQGQQGQQGQQGQQQQG. Residues 332 to 481 form the Cupin type-1 2 domain; sequence ENIDDPARAD…AFQISLEEAR (150 aa). Phosphoserine is present on Ser352. Residues Thr445 and Thr487 each carry the phosphothreonine modification.

This sequence belongs to the 11S seed storage protein (globulins) family. As to quaternary structure, hexamer; each subunit is composed of an acidic and a basic chain derived from a single precursor and linked by a disulfide bond.

In terms of biological role, this is a seed storage protein. In Brassica napus (Rape), this protein is Cruciferin CRU1 (CRU1).